The sequence spans 301 residues: Protoheme IX farnesyltransferase (301 aa).

The next 9 membrane-spanning stretches (helical) occupy residues 29–49 (VVAL…PGVV), 51–71 (IVPL…AAAF), 96–118 (VSIA…VLYV), 123–143 (LTAW…TAYL), 151–171 (IVVG…AVTG), 177–197 (ALLL…ALAI), 223–243 (CIFL…LVGM), 244–264 (CGPV…YKAW), and 281–301 (FSIY…YLWL).

The protein belongs to the UbiA prenyltransferase family. Protoheme IX farnesyltransferase subfamily.

The protein resides in the cell inner membrane. The catalysed reaction is heme b + (2E,6E)-farnesyl diphosphate + H2O = Fe(II)-heme o + diphosphate. Its pathway is porphyrin-containing compound metabolism; heme O biosynthesis; heme O from protoheme: step 1/1. Its function is as follows. Converts heme B (protoheme IX) to heme O by substitution of the vinyl group on carbon 2 of heme B porphyrin ring with a hydroxyethyl farnesyl side group. The protein is Protoheme IX farnesyltransferase of Shewanella halifaxensis (strain HAW-EB4).